Reading from the N-terminus, the 227-residue chain is ATP synthase subunit a (227 aa).

6 helical membrane passes run 14 to 34 (LLNI…FVSF), 69 to 89 (WVVL…IGLF), 98 to 118 (QLSM…VYGF), 137 to 157 (LLVP…PLAL), 169 to 189 (HLLM…SVML), and 205 to 223 (IAVA…TLYL).

This sequence belongs to the ATPase A chain family. F-type ATPases have 2 components, CF(1) - the catalytic core - and CF(0) - the membrane proton channel. CF(1) has five subunits: alpha(3), beta(3), gamma(1), delta(1), epsilon(1). CF(0) has three main subunits: a, b and c.

The protein localises to the mitochondrion inner membrane. Mitochondrial membrane ATP synthase (F(1)F(0) ATP synthase or Complex V) produces ATP from ADP in the presence of a proton gradient across the membrane which is generated by electron transport complexes of the respiratory chain. F-type ATPases consist of two structural domains, F(1) - containing the extramembraneous catalytic core and F(0) - containing the membrane proton channel, linked together by a central stalk and a peripheral stalk. During catalysis, ATP synthesis in the catalytic domain of F(1) is coupled via a rotary mechanism of the central stalk subunits to proton translocation. Key component of the proton channel; it may play a direct role in the translocation of protons across the membrane. This chain is ATP synthase subunit a (ATP6), found in Branchiostoma floridae (Florida lancelet).